The chain runs to 405 residues: Maintenance of mitochondrial morphology protein 1 (405 aa).

At 1-86 (MQVLNFYVNP…TGSTKSFTQG (86 aa)) the chain is on the lumenal side. A helical transmembrane segment spans residues 87–107 (LIIGQLSVIILLGIFIKFFVF). Topologically, residues 108–405 (ADSSTTSSTS…QPVSTTESDH (298 aa)) are cytoplasmic. Residues 166–385 (APESLDWFNV…EPRFQVVKLP (220 aa)) form the SMP-LTD domain. The interval 303-324 (SEPRVAMDSPQSTRDDNSEEPN) is disordered.

Belongs to the MMM1 family. As to quaternary structure, homodimer. Component of the ER-mitochondria encounter structure (ERMES) or MDM complex, composed of MMM1, MDM10, MDM12 and MDM34. An MMM1 homodimer associates with one molecule of MDM12 on each side in a pairwise head-to-tail manner, and the SMP-LTD domains of MMM1 and MDM12 generate a continuous hydrophobic tunnel for phospholipid trafficking.

The protein resides in the endoplasmic reticulum membrane. Its function is as follows. Component of the ERMES/MDM complex, which serves as a molecular tether to connect the endoplasmic reticulum (ER) and mitochondria. Components of this complex are involved in the control of mitochondrial shape and protein biogenesis, and function in nonvesicular lipid trafficking between the ER and mitochondria. The MDM12-MMM1 subcomplex functions in the major beta-barrel assembly pathway that is responsible for biogenesis of all outer membrane beta-barrel proteins, and acts in a late step after the SAM complex. The MDM10-MDM12-MMM1 subcomplex further acts in the TOM40-specific pathway after the action of the MDM12-MMM1 complex. Essential for establishing and maintaining the structure of mitochondria and maintenance of mtDNA nucleoids. The chain is Maintenance of mitochondrial morphology protein 1 from Meyerozyma guilliermondii (strain ATCC 6260 / CBS 566 / DSM 6381 / JCM 1539 / NBRC 10279 / NRRL Y-324) (Yeast).